A 142-amino-acid polypeptide reads, in one-letter code: Large ribosomal subunit protein uL11 (142 aa).

Alanine 2 bears the N,N,N-trimethylalanine mark. N6,N6,N6-trimethyllysine is present on residues lysine 4 and lysine 40.

This sequence belongs to the universal ribosomal protein uL11 family. In terms of assembly, part of the ribosomal stalk of the 50S ribosomal subunit. Interacts with L10 and the large rRNA to form the base of the stalk. L10 forms an elongated spine to which L12 dimers bind in a sequential fashion forming a multimeric L10(L12)X complex. Post-translationally, one or more lysine residues are methylated.

Forms part of the ribosomal stalk which helps the ribosome interact with GTP-bound translation factors. The sequence is that of Large ribosomal subunit protein uL11 from Shigella flexneri.